A 971-amino-acid chain; its full sequence is 116 kDa U5 small nuclear ribonucleoprotein component (971 aa).

Met-1 carries the N-acetylmethionine modification. Positions Met-1–Pro-52 are disordered. Acidic residues predominate over residues Leu-17 to His-47. Ser-19 carries the post-translational modification Phosphoserine. Lys-63 is covalently cross-linked (Glycyl lysine isopeptide (Lys-Gly) (interchain with G-Cter in SUMO1); alternate). Lys-63 is covalently cross-linked (Glycyl lysine isopeptide (Lys-Gly) (interchain with G-Cter in SUMO2); alternate). Residue Thr-85 is modified to Phosphothreonine. Residues Glu-126 to Lys-408 form the tr-type G domain. GTP is bound by residues Gly-135–Thr-142, Asp-203–His-207, and Asn-257–Asp-260.

This sequence belongs to the TRAFAC class translation factor GTPase superfamily. Classic translation factor GTPase family. EF-G/EF-2 subfamily. As to quaternary structure, component of the U5 snRNP and the U4/U6-U5 tri-snRNP complex, a building block of the spliceosome. The U4/U6-U5 tri-snRNP complex is composed of the U4, U6 and U5 snRNAs and at least PRPF3, PRPF4, PRPF6, PRPF8, PRPF31, SNRNP200, TXNL4A, SNRNP40, DDX23, CD2BP2, PPIH, SNU13, EFTUD2, SART1 and USP39. Component of the pre-catalytic, catalytic and post-catalytic spliceosome complexes. Component of the minor spliceosome, which splices U12-type introns. Within this complex, interacts with CRIPT. Interacts with ERBB4 and PRPF8. Interacts with PIH1D1. Interacts with RPAP3 and URI1 in a ZNHIT2-dependent manner. Interacts with NRDE2. Interacts with FAM50A. Interacts with UBL5.

The protein localises to the nucleus. Required for pre-mRNA splicing as component of the spliceosome, including pre-catalytic, catalytic and post-catalytic spliceosomal complexes. Component of the U5 snRNP and the U4/U6-U5 tri-snRNP complex, a building block of the spliceosome. As a component of the minor spliceosome, involved in the splicing of U12-type introns in pre-mRNAs. This Mus musculus (Mouse) protein is 116 kDa U5 small nuclear ribonucleoprotein component (Eftud2).